A 176-amino-acid chain; its full sequence is RNA polymerase sigma factor SigO (176 aa).

A Polymerase core binding motif is present at residues 30-43 (DARSLDELFKQFYK). A DNA-binding region (H-T-H motif) is located at residues 139-158 (MQEIADSLGESRQNISNIHK).

It belongs to the sigma-70 factor family. Interacts with RNA polymerase.

Sigma factors are initiation factors that promote the attachment of RNA polymerase to specific initiation sites and are then released. Together with its coactivator RsoA, positively regulates the expression of at least three operons, including oxdC-yvrL, sigO-rsoA and yvrJ. Required for the acid stress-dependent induction of the oxalate decarboxylase oxdC. This is RNA polymerase sigma factor SigO (sigO) from Bacillus subtilis (strain 168).